Reading from the N-terminus, the 334-residue chain is Transcription initiation factor IIB (334 aa).

A TFIIB-type zinc finger spans residues 34 to 65 (EELVCPMCDSKNIIKDYEKAEIVCEDCGCVLQ). Residues C38, C41, C57, and C60 each coordinate Zn(2+). 2 tandem repeats follow at residues 151–234 (SELD…SREL) and 245–326 (DYVP…ELTE).

It belongs to the TFIIB family.

Functionally, stabilizes TBP binding to an archaeal box-A promoter. Also responsible for recruiting RNA polymerase II to the pre-initiation complex (DNA-TBP-TFIIB). This chain is Transcription initiation factor IIB, found in Methanococcus aeolicus (strain ATCC BAA-1280 / DSM 17508 / OCM 812 / Nankai-3).